We begin with the raw amino-acid sequence, 1040 residues long: Multidrug resistance protein MdtB (1040 aa).

A run of 12 helical transmembrane segments spans residues 25-45 (LLMA…PVAA), 347-367 (LMLA…NIPA), 369-389 (IIPG…MVFL), 396-416 (LTLM…IVVI), 440-460 (IGFT…PLLF), 472-492 (FAVT…TLTP), 537-557 (WLTL…WIVI), 863-883 (LGST…VLGV), 888-908 (FIHP…ALLA), 910-930 (IIAG…LIGI), 968-988 (ILMT…STGV), and 998-1018 (IAMV…TPVI).

Belongs to the resistance-nodulation-cell division (RND) (TC 2.A.6) family. MdtB subfamily. Part of a tripartite efflux system composed of MdtA, MdtB and MdtC. MdtB forms a heteromultimer with MdtC.

Its subcellular location is the cell inner membrane. This Salmonella dublin (strain CT_02021853) protein is Multidrug resistance protein MdtB.